A 478-amino-acid polypeptide reads, in one-letter code: Sialidase-4 (478 aa).

The FRIP motif motif lies at Tyr-22–Pro-25. Substrate is bound by residues Arg-23 and Arg-43. Residues Asp-47 and Asp-48 each act as proton acceptor in the active site. Residues Val-127–Ser-138 form a BNR 1 repeat. Residues Tyr-177 and Tyr-179 each coordinate substrate. The stretch at Phe-200 to Cys-211 is one BNR 2 repeat. Substrate contacts are provided by Glu-222 and Arg-238. A BNR 3 repeat occupies Ala-247–Pro-258. Disordered regions lie at residues Ile-285–Leu-307 and Ser-335–Pro-359. Arg-383 provides a ligand contact to substrate. The active-site Nucleophile is the Tyr-413. Residue Glu-434 is part of the active site.

This sequence belongs to the glycosyl hydrolase 33 family. In terms of tissue distribution, highly expressed in brain, particularly in hippocampus, and at lower levels in liver and spleen. Expressed in hippocampal neurons (at protein level).

It is found in the cell membrane. It localises to the endoplasmic reticulum membrane. The protein resides in the microsome membrane. Its subcellular location is the mitochondrion inner membrane. The protein localises to the mitochondrion outer membrane. It is found in the cell projection. It localises to the neuron projection. The protein resides in the lysosome lumen. The enzyme catalyses Hydrolysis of alpha-(2-&gt;3)-, alpha-(2-&gt;6)-, alpha-(2-&gt;8)- glycosidic linkages of terminal sialic acid residues in oligosaccharides, glycoproteins, glycolipids, colominic acid and synthetic substrates.. The catalysed reaction is a ganglioside GM3 + H2O = a beta-D-galactosyl-(1-&gt;4)-beta-D-glucosyl-(1&lt;-&gt;1)-ceramide + N-acetylneuraminate. It carries out the reaction a ganglioside GM3 (d18:1(4E)) + H2O = a beta-D-Gal-(1-&gt;4)-beta-D-Glc-(1&lt;-&gt;1)-Cer(d18:1(4E)) + N-acetylneuraminate. It catalyses the reaction a ganglioside GM2 + H2O = a ganglioside GA2 + N-acetylneuraminate. The enzyme catalyses a ganglioside GM2 (d18:1(4E)) + H2O = a ganglioside GA2 (d18:1(4E)) + N-acetylneuraminate. The catalysed reaction is a ganglioside GD1a + H2O = a ganglioside GM1 + N-acetylneuraminate. It carries out the reaction a ganglioside GD1a (d18:1(4E)) + H2O = a ganglioside GM1 (d18:1(4E)) + N-acetylneuraminate. It catalyses the reaction a ganglioside GD3 + H2O = a ganglioside GM3 + N-acetylneuraminate. The enzyme catalyses a ganglioside GD3 (d18:1(4E)) + H2O = a ganglioside GM3 (d18:1(4E)) + N-acetylneuraminate. Functionally, exo-alpha-sialidase that catalyzes the hydrolytic cleavage of the terminal sialic acid (N-acetylneuraminic acid, Neu5Ac) of a glycan moiety in the catabolism of glycolipids, glycoproteins and oligosacharides. Efficiently hydrolyzes gangliosides including alpha-(2-&gt;3)-sialylated GD1a and GM3 and alpha-(2-&gt;8)-sialylated GD3. Hydrolyzes poly-alpha-(2-&gt;8)-sialylated neural cell adhesion molecule NCAM1 likely at growth cones, suppressing neurite outgrowth in hippocampal neurons. May desialylate sialyl Lewis A and X antigens at the cell surface, down-regulating these glycan epitopes recognized by SELE/E selectin in the initiation of cell adhesion and extravasation. Has sialidase activity toward mucin, fetuin and sialyllactose. In Mus musculus (Mouse), this protein is Sialidase-4 (Neu4).